The chain runs to 1876 residues: Phenolphthiocerol/phthiocerol polyketide synthase subunit A (1876 aa).

An N-acetylthreonine modification is found at T2. The region spanning 9-83 is the Carrier 1 domain; the sequence is ADLRHWLIDY…ALAAYLAAPE (75 aa). Position 43 is an O-(pantetheine 4'-phosphoryl)serine (S43). The region spanning 101-526 is the Ketosynthase family 3 (KS3) domain; the sequence is DEPIAVVGMG…GTNAHVVIEQ (426 aa). Active-site for beta-ketoacyl synthase activity residues include C273, H408, and H448. An acyltransferase region spans residues 626–950; sequence SPGPGTVFVY…NLNKAHTIHP (325 aa). S720 acts as the For malonyltransferase activity in catalysis. The N-terminal hotdog fold stretch occupies residues 997–1112; that stretch reads HTTVATVSAS…AQLSSSPSDS (116 aa). One can recognise a PKS/mFAS DH domain in the interval 997 to 1267; sequence HTTVATVSAS…YRALDFGLDV (271 aa). The active-site Proton acceptor; for dehydratase activity is the H1027. The interval 1102 to 1130 is disordered; that stretch reads TAQLSSSPSDSASSLNEHHRANGQPPERA. The span at 1106–1115 shows a compositional bias: low complexity; sequence SSSPSDSASS. A C-terminal hotdog fold region spans residues 1130–1267; that stretch reads AHRDLIPDLA…YRALDFGLDV (138 aa). Catalysis depends on D1186, which acts as the Proton donor; for dehydratase activity. 1491 to 1551 lines the NADP(+) pocket; the sequence is AAYLITGGLG…RRRIDAIRAL (61 aa). Residues 1491-1728 are beta-ketoacyl reductase; the sequence is AAYLITGGLG…DGYDVAQAVV (238 aa). The Carrier 2 domain occupies 1759 to 1836; that stretch reads EVRSELEQGL…SLASYLAKRV (78 aa). At S1796 the chain carries O-(pantetheine 4'-phosphoryl)serine.

The cofactor is NADP(+). Pantetheine 4'-phosphate is required as a cofactor.

The enzyme catalyses icosanoyl-[(phenol)carboxyphthiodiolenone synthase] + 2 (S)-methylmalonyl-CoA + 3 malonyl-CoA + 5 NADPH + 10 H(+) = C32-carboxyphthiodiolenone-[(phenol)carboxyphthiodiolenone synthase] + 5 CO2 + 5 NADP(+) + 5 CoA + 2 H2O. The catalysed reaction is docosanoyl-[(phenol)carboxyphthiodiolenone synthase] + 2 (S)-methylmalonyl-CoA + 3 malonyl-CoA + 5 NADPH + 10 H(+) = C34-carboxyphthiodiolenone-[(phenol)carboxyphthiodiolenone synthase] + 5 CO2 + 5 NADP(+) + 5 CoA + 2 H2O. It catalyses the reaction 17-(4-hydroxyphenyl)heptadecanoyl-[(phenol)carboxyphthiodiolenone synthase] + 2 (S)-methylmalonyl-CoA + 3 malonyl-CoA + 5 NADPH + 10 H(+) = C35-(phenol)carboxyphthiodiolenone-[(phenol)carboxyphthiodiolenone synthase] + 5 CO2 + 5 NADP(+) + 5 CoA + 2 H2O. It carries out the reaction 19-(4-hydroxyphenyl)nonadecanoyl-[(phenol)carboxyphthiodiolenone synthase] + 2 (S)-methylmalonyl-CoA + 3 malonyl-CoA + 5 NADPH + 10 H(+) = C37-(phenol)carboxyphthiodiolenone-[(phenol)carboxyphthiodiolenone synthase] + 5 CO2 + 5 NADP(+) + 5 CoA + 2 H2O. Its pathway is lipid metabolism; fatty acid biosynthesis. Its function is as follows. Part of the PpsABCDE complex involved in the biosynthesis of the lipid core common to phthiocerols and phenolphthiocerols by successive additions of malonyl-CoA or methylmalonyl-CoA extender units. PpsA can accept as substrate the activated forms of either icosanoyl (C20), docosanoyl (C22) or lignoceroyl (C24) groups from FadD26, or a (4-hydroxyphenyl)-C17 or (4-hydroxyphenyl)-C19 fatty acyl from FadD29. PpsA initiates the biosynthesis and extends its substrate using a malonyl-CoA extender unit. The PpsB and PpsC proteins add the second and third malonyl-CoA extender units. PpsD adds an (R)-methylmalonyl unit and PpsE adds a second (R)-methylmalonyl unit. The incorporation of the methylmalonyl units results in formation of two branched methyl groups in the elongated product. The protein is Phenolphthiocerol/phthiocerol polyketide synthase subunit A (ppsA) of Mycobacterium tuberculosis (strain ATCC 25618 / H37Rv).